The chain runs to 209 residues: uncharacterized protein (209 aa).

The stretch at 39–75 (VSFENFMERYDTMEKNIQDLQNKYEEMANNLVAVMAD) forms a coiled coil. The disordered stretch occupies residues 103-131 (TMKDATSLPPPNPNNEQSVFTNGSPTSGK). The span at 116–129 (NNEQSVFTNGSPTS) shows a compositional bias: polar residues.

The protein belongs to the asfivirus K205R family.

The protein localises to the host cytoplasm. In terms of biological role, induces host endoplasmic reticulum stress and consequently activates autophagy and NF-kappa-B signaling pathway. In turn, may induce autophagy-mediated STING1 degradation and innate immune evasion. This is an uncharacterized protein from Ornithodoros (relapsing fever ticks).